Consider the following 348-residue polypeptide: 3-isopropylmalate dehydrogenase (348 aa).

76 to 87 (GPKWTDPNNRPE) is an NAD(+) binding site. Substrate-binding residues include Arg94, Arg104, Arg132, and Asp217. Mg(2+) contacts are provided by Asp217, Asp241, and Asp245. NAD(+) is bound at residue 275-287 (GSAPDIAGKNVAN).

Belongs to the isocitrate and isopropylmalate dehydrogenases family. LeuB type 1 subfamily. As to quaternary structure, homodimer. It depends on Mg(2+) as a cofactor. Mn(2+) is required as a cofactor.

Its subcellular location is the cytoplasm. The catalysed reaction is (2R,3S)-3-isopropylmalate + NAD(+) = 4-methyl-2-oxopentanoate + CO2 + NADH. It participates in amino-acid biosynthesis; L-leucine biosynthesis; L-leucine from 3-methyl-2-oxobutanoate: step 3/4. Catalyzes the oxidation of 3-carboxy-2-hydroxy-4-methylpentanoate (3-isopropylmalate) to 3-carboxy-4-methyl-2-oxopentanoate. The product decarboxylates to 4-methyl-2 oxopentanoate. The chain is 3-isopropylmalate dehydrogenase from Staphylococcus aureus (strain COL).